Here is a 277-residue protein sequence, read N- to C-terminus: 4-hydroxy-tetrahydrodipicolinate reductase (277 aa).

NAD(+) contacts are provided by residues 11 to 16 and 110 to 112; these read GALGRM and GTT. Catalysis depends on histidine 166, which acts as the Proton donor/acceptor. Histidine 167 is a (S)-2,3,4,5-tetrahydrodipicolinate binding site. Catalysis depends on lysine 170, which acts as the Proton donor. Residue 176–177 coordinates (S)-2,3,4,5-tetrahydrodipicolinate; the sequence is GT.

The protein belongs to the DapB family.

Its subcellular location is the cytoplasm. The catalysed reaction is (S)-2,3,4,5-tetrahydrodipicolinate + NAD(+) + H2O = (2S,4S)-4-hydroxy-2,3,4,5-tetrahydrodipicolinate + NADH + H(+). It catalyses the reaction (S)-2,3,4,5-tetrahydrodipicolinate + NADP(+) + H2O = (2S,4S)-4-hydroxy-2,3,4,5-tetrahydrodipicolinate + NADPH + H(+). The protein operates within amino-acid biosynthesis; L-lysine biosynthesis via DAP pathway; (S)-tetrahydrodipicolinate from L-aspartate: step 4/4. Catalyzes the conversion of 4-hydroxy-tetrahydrodipicolinate (HTPA) to tetrahydrodipicolinate. The protein is 4-hydroxy-tetrahydrodipicolinate reductase of Synechococcus sp. (strain CC9605).